Here is a 294-residue protein sequence, read N- to C-terminus: 2,2',3-trihydroxybiphenyl dioxygenase (294 aa).

VOC domains lie at 7–120 (GYLI…LYVE) and 144–264 (GLGH…LGFG). Residues His-147, His-209, and Glu-260 each coordinate Fe cation.

The protein belongs to the extradiol ring-cleavage dioxygenase family. Monomer. The cofactor is Fe(2+).

The protein operates within xenobiotic degradation; dibenzo-p-dioxin degradation; 2-hydroxymuconate and catechol from dibenzo-p-dioxin: step 2/3. It participates in xenobiotic degradation; dibenzofuran degradation; 2-hydroxy-2,4-pentadienoate and salicylate from dibenzofuran: step 2/3. In terms of biological role, responsible for meta-cleavage of the first aromatic ring of 2,2',3-trihydroxybiphenyl and 2,3-dihydroxybiphenyl. 2,2',3-trihydroxydiphenyl ether, catechol, 3-methylcatechol, and 4-methylcatechol are oxidized less efficiently and 3,4-dihydroxybiphenyl is oxidized considerably less efficiently. In Sphingomonas paucimobilis (Pseudomonas paucimobilis), this protein is 2,2',3-trihydroxybiphenyl dioxygenase (dbfB).